The primary structure comprises 168 residues: 2-C-methyl-D-erythritol 2,4-cyclodiphosphate synthase (168 aa).

Asp-13 and His-15 together coordinate a divalent metal cation. Residues 13–15 and 39–40 each bind 4-CDP-2-C-methyl-D-erythritol 2-phosphate; these read DVH and HS. Position 47 (His-47) interacts with a divalent metal cation. Residues 61 to 63, 66 to 70, Phe-144, and Arg-147 each bind 4-CDP-2-C-methyl-D-erythritol 2-phosphate; these read DIG and FPDTD.

Belongs to the IspF family. As to quaternary structure, homotrimer. It depends on a divalent metal cation as a cofactor.

The enzyme catalyses 4-CDP-2-C-methyl-D-erythritol 2-phosphate = 2-C-methyl-D-erythritol 2,4-cyclic diphosphate + CMP. Its pathway is isoprenoid biosynthesis; isopentenyl diphosphate biosynthesis via DXP pathway; isopentenyl diphosphate from 1-deoxy-D-xylulose 5-phosphate: step 4/6. Functionally, involved in the biosynthesis of isopentenyl diphosphate (IPP) and dimethylallyl diphosphate (DMAPP), two major building blocks of isoprenoid compounds. Catalyzes the conversion of 4-diphosphocytidyl-2-C-methyl-D-erythritol 2-phosphate (CDP-ME2P) to 2-C-methyl-D-erythritol 2,4-cyclodiphosphate (ME-CPP) with a corresponding release of cytidine 5-monophosphate (CMP). The polypeptide is 2-C-methyl-D-erythritol 2,4-cyclodiphosphate synthase (Ralstonia nicotianae (strain ATCC BAA-1114 / GMI1000) (Ralstonia solanacearum)).